The chain runs to 225 residues: NAD(P)H-quinone oxidoreductase subunit K, chloroplastic (225 aa).

Residues Cys43, Cys44, Cys108, and Cys139 each coordinate [4Fe-4S] cluster.

It belongs to the complex I 20 kDa subunit family. NDH is composed of at least 16 different subunits, 5 of which are encoded in the nucleus. It depends on [4Fe-4S] cluster as a cofactor.

The protein resides in the plastid. It is found in the chloroplast thylakoid membrane. It catalyses the reaction a plastoquinone + NADH + (n+1) H(+)(in) = a plastoquinol + NAD(+) + n H(+)(out). The enzyme catalyses a plastoquinone + NADPH + (n+1) H(+)(in) = a plastoquinol + NADP(+) + n H(+)(out). Functionally, NDH shuttles electrons from NAD(P)H:plastoquinone, via FMN and iron-sulfur (Fe-S) centers, to quinones in the photosynthetic chain and possibly in a chloroplast respiratory chain. The immediate electron acceptor for the enzyme in this species is believed to be plastoquinone. Couples the redox reaction to proton translocation, and thus conserves the redox energy in a proton gradient. In Oenothera argillicola (Appalachian evening primrose), this protein is NAD(P)H-quinone oxidoreductase subunit K, chloroplastic.